A 275-amino-acid chain; its full sequence is Large ribosomal subunit protein uL2 (275 aa).

Residues 224-251 (VMNPVDHPHGGGEGRSPIGRKAPVTPWG) are disordered.

The protein belongs to the universal ribosomal protein uL2 family. Part of the 50S ribosomal subunit. Forms a bridge to the 30S subunit in the 70S ribosome.

Functionally, one of the primary rRNA binding proteins. Required for association of the 30S and 50S subunits to form the 70S ribosome, for tRNA binding and peptide bond formation. It has been suggested to have peptidyltransferase activity; this is somewhat controversial. Makes several contacts with the 16S rRNA in the 70S ribosome. The sequence is that of Large ribosomal subunit protein uL2 from Heliobacterium modesticaldum (strain ATCC 51547 / Ice1).